The following is a 274-amino-acid chain: Acetyl-coenzyme A carboxylase carboxyl transferase subunit beta (274 aa).

The 257-residue stretch at 18–274 (IWTKCKKCDY…FYNRQCFLKF (257 aa)) folds into the CoA carboxyltransferase N-terminal domain. Residues Cys22, Cys25, Cys41, and Cys44 each contribute to the Zn(2+) site. The C4-type zinc-finger motif lies at 22–44 (CKKCDYILLQKDFEENLMVCPKC).

It belongs to the AccD/PCCB family. Acetyl-CoA carboxylase is a heterohexamer composed of biotin carboxyl carrier protein (AccB), biotin carboxylase (AccC) and two subunits each of ACCase subunit alpha (AccA) and ACCase subunit beta (AccD). Requires Zn(2+) as cofactor.

It is found in the cytoplasm. The catalysed reaction is N(6)-carboxybiotinyl-L-lysyl-[protein] + acetyl-CoA = N(6)-biotinyl-L-lysyl-[protein] + malonyl-CoA. It functions in the pathway lipid metabolism; malonyl-CoA biosynthesis; malonyl-CoA from acetyl-CoA: step 1/1. Functionally, component of the acetyl coenzyme A carboxylase (ACC) complex. Biotin carboxylase (BC) catalyzes the carboxylation of biotin on its carrier protein (BCCP) and then the CO(2) group is transferred by the transcarboxylase to acetyl-CoA to form malonyl-CoA. The chain is Acetyl-coenzyme A carboxylase carboxyl transferase subunit beta from Endomicrobium trichonymphae.